The sequence spans 866 residues: Sphingomyelin phosphodiesterase 4 (866 aa).

Phosphoserine is present on residues Ser-169 and Ser-285. Thr-708 carries the phosphothreonine modification. At Ser-792 the chain carries Phosphoserine. Residues 822–842 traverse the membrane as a helical segment; sequence LLLAFFVASLFCVGPLPCTLL.

It depends on Mg(2+) as a cofactor. As to expression, widely expressed, with highest levels in heart and skeletal muscle. In terms of tissue distribution, expressed in skeletal muscle (at protein level). Expressed in skeletal muscle but a lower levels than isoform 1 (at protein level).

It is found in the endoplasmic reticulum membrane. It localises to the golgi apparatus membrane. The protein resides in the nucleus envelope. Its subcellular location is the cell membrane. The protein localises to the sarcolemma. The enzyme catalyses a sphingomyelin + H2O = phosphocholine + an N-acylsphing-4-enine + H(+). Its activity is regulated as follows. Activated by phosphatidylserine and tumor necrosis factor (TNF). Inhibited by scyphostatin. Functionally, catalyzes the hydrolysis of membrane sphingomyelin to form phosphorylcholine and ceramide. It has a relevant role in the homeostasis of membrane sphingolipids, thereby influencing membrane integrity, and endoplasmic reticulum organization and function. May sensitize cells to DNA damage-induced apoptosis. In skeletal muscle, mediates TNF-stimulated oxidant production. The chain is Sphingomyelin phosphodiesterase 4 from Homo sapiens (Human).